A 1031-amino-acid chain; its full sequence is Sodium/potassium-transporting ATPase subunit alpha (1031 aa).

Positions 1–33 (MADPGDLESRGKADSYSVAEKKSAPKKISKKNA) are disordered. Residues 7–23 (LESRGKADSYSVAEKKS) show a composition bias toward basic and acidic residues. Residues 24–33 (APKKISKKNA) show a composition bias toward basic residues. Transmembrane regions (helical) follow at residues 102-123 (MFGGFSMLLWIGAILCFFAFGI), 136-155 (LYLGIVLSVVVIITGCFSYY), 297-319 (FIHIVTGVAVFLGVSFLIISLAM), and 326-354 (AIIFLIGIIVANVPEGLLATVTVCLTLTA). Aspartate 382 (4-aspartylphosphate intermediate) is an active-site residue. Lysine 512 contributes to the ATP binding site. Aspartate 725 and aspartate 729 together coordinate Mg(2+). Helical transmembrane passes span 795–818 (ISPFLMFILFGIPLPLGTITILCI), 857–882 (LISLAYGQIGMMQATAGFFTYFIILA), 924–944 (LTCQTAFFTTIVVVQWADLII), and 961–986 (FLNFGLFFETALAAFLQYTPGVNTGL).

Belongs to the cation transport ATPase (P-type) (TC 3.A.3) family. Type IIC subfamily. As to quaternary structure, the sodium/potassium-transporting ATPase is composed of a catalytic alpha subunit, an auxiliary non-catalytic beta subunit and an additional regulatory subunit.

Its subcellular location is the cell membrane. It catalyses the reaction K(+)(out) + Na(+)(in) + ATP + H2O = K(+)(in) + Na(+)(out) + ADP + phosphate + H(+). This alpha subunit is resistant to ouabain. In terms of biological role, this is the catalytic component of the active enzyme, which catalyzes the hydrolysis of ATP coupled with the exchange of sodium and potassium ions across the plasma membrane. This action creates the electrochemical gradient of sodium and potassium ions, providing the energy for active transport of various nutrients. The protein is Sodium/potassium-transporting ATPase subunit alpha of Hydra vulgaris (Hydra).